The chain runs to 322 residues: N-acetyl-gamma-glutamyl-phosphate reductase (322 aa).

The active site involves C132.

This sequence belongs to the NAGSA dehydrogenase family. Type 1 subfamily.

It localises to the cytoplasm. The enzyme catalyses N-acetyl-L-glutamate 5-semialdehyde + phosphate + NADP(+) = N-acetyl-L-glutamyl 5-phosphate + NADPH + H(+). Its pathway is amino-acid biosynthesis; L-arginine biosynthesis; N(2)-acetyl-L-ornithine from L-glutamate: step 3/4. Its function is as follows. Catalyzes the NADPH-dependent reduction of N-acetyl-5-glutamyl phosphate to yield N-acetyl-L-glutamate 5-semialdehyde. In Phocaeicola vulgatus (strain ATCC 8482 / DSM 1447 / JCM 5826 / CCUG 4940 / NBRC 14291 / NCTC 11154) (Bacteroides vulgatus), this protein is N-acetyl-gamma-glutamyl-phosphate reductase.